Reading from the N-terminus, the 301-residue chain is N-acetylmuramic acid 6-phosphate etherase (301 aa).

Residues 59–222 (TSEALMHGGR…STSVMVKLGK (164 aa)) form the SIS domain. Glu-87 (proton donor) is an active-site residue. Residue Glu-118 is part of the active site.

This sequence belongs to the GCKR-like family. MurNAc-6-P etherase subfamily. Homodimer.

It catalyses the reaction N-acetyl-D-muramate 6-phosphate + H2O = N-acetyl-D-glucosamine 6-phosphate + (R)-lactate. It participates in amino-sugar metabolism; N-acetylmuramate degradation. In terms of biological role, specifically catalyzes the cleavage of the D-lactyl ether substituent of MurNAc 6-phosphate, producing GlcNAc 6-phosphate and D-lactate. This Picosynechococcus sp. (strain ATCC 27264 / PCC 7002 / PR-6) (Agmenellum quadruplicatum) protein is N-acetylmuramic acid 6-phosphate etherase.